The primary structure comprises 363 residues: UDP-N-acetylglucosamine--N-acetylmuramyl-(pentapeptide) pyrophosphoryl-undecaprenol N-acetylglucosamine transferase (363 aa).

UDP-N-acetyl-alpha-D-glucosamine-binding positions include Thr12–Gly14, Ser196, and Gln291.

It belongs to the glycosyltransferase 28 family. MurG subfamily.

It is found in the cell inner membrane. It carries out the reaction di-trans,octa-cis-undecaprenyl diphospho-N-acetyl-alpha-D-muramoyl-L-alanyl-D-glutamyl-meso-2,6-diaminopimeloyl-D-alanyl-D-alanine + UDP-N-acetyl-alpha-D-glucosamine = di-trans,octa-cis-undecaprenyl diphospho-[N-acetyl-alpha-D-glucosaminyl-(1-&gt;4)]-N-acetyl-alpha-D-muramoyl-L-alanyl-D-glutamyl-meso-2,6-diaminopimeloyl-D-alanyl-D-alanine + UDP + H(+). The protein operates within cell wall biogenesis; peptidoglycan biosynthesis. Its function is as follows. Cell wall formation. Catalyzes the transfer of a GlcNAc subunit on undecaprenyl-pyrophosphoryl-MurNAc-pentapeptide (lipid intermediate I) to form undecaprenyl-pyrophosphoryl-MurNAc-(pentapeptide)GlcNAc (lipid intermediate II). The sequence is that of UDP-N-acetylglucosamine--N-acetylmuramyl-(pentapeptide) pyrophosphoryl-undecaprenol N-acetylglucosamine transferase from Legionella pneumophila (strain Corby).